A 184-amino-acid polypeptide reads, in one-letter code: CKLF-like MARVEL transmembrane domain-containing protein 3 (184 aa).

Acidic residues predominate over residues 1–12 (MWPPDAEPEPDP). A disordered region spans residues 1–22 (MWPPDAEPEPDPESAHGPRSGR). In terms of domain architecture, MARVEL spans 36-155 (FLCSLKGRLL…DFYLIFNEVA (120 aa)). 3 consecutive transmembrane segments (helical) span residues 64–84 (ASAFLTVPLLEFLLAVYFLFA), 96–116 (LCWPMMDFLRCVTAALIYFVI), and 131–151 (AAGVFGFFATIVFAIDFYLIF). The tract at residues 163–184 (SGNETTAHRTEEENSNSDSDSD) is disordered. Acidic residues predominate over residues 175–184 (ENSNSDSDSD).

The protein belongs to the chemokine-like factor family.

It localises to the membrane. The sequence is that of CKLF-like MARVEL transmembrane domain-containing protein 3 (Cmtm3) from Mus musculus (Mouse).